Here is a 469-residue protein sequence, read N- to C-terminus: Phosphatidylinositol 4-kinase type 2-alpha (469 aa).

Disordered regions lie at residues methionine 1–proline 30 and threonine 50–arginine 72. Residues glutamate 16 to proline 25 are compositionally biased toward polar residues. The span at threonine 50 to glycine 60 shows a compositional bias: low complexity. Residues aspartate 115–threonine 443 form the PI3K/PI4K catalytic domain. The interval isoleucine 121–glycine 127 is G-loop. ATP-binding positions include serine 122–serine 128 and lysine 143. The tract at residues glutamate 148 to tyrosine 150 is important for substrate binding. The segment at lysine 156–cysteine 169 is important for interaction with membranes. S-palmitoyl cysteine attachment occurs at residues cysteine 165, cysteine 166, cysteine 168, and cysteine 169. Glutamine 252 to valine 255 lines the ATP pocket. The interval lysine 259–arginine 267 is important for interaction with membranes. The catalytic loop stretch occupies residues arginine 296 to asparagine 304. The interval alanine 334–phenylalanine 354 is activation loop. Position 336 (aspartate 336) interacts with ATP. Residues tryptophan 349–tryptophan 358 form an important for interaction with membranes region.

Belongs to the PI3/PI4-kinase family. Type II PI4K subfamily.

The protein localises to the golgi apparatus. It is found in the trans-Golgi network membrane. The protein resides in the membrane raft. It localises to the endosome. Its subcellular location is the endosome membrane. The protein localises to the cytoplasmic vesicle. It is found in the cell projection. The protein resides in the dendrite. It localises to the presynaptic cell membrane. Its subcellular location is the synapse. The protein localises to the synaptosome. It is found in the mitochondrion. The protein resides in the membrane. It localises to the cell membrane. Its subcellular location is the perikaryon. The protein localises to the neuron projection. It carries out the reaction a 1,2-diacyl-sn-glycero-3-phospho-(1D-myo-inositol) + ATP = a 1,2-diacyl-sn-glycero-3-phospho-(1D-myo-inositol 4-phosphate) + ADP + H(+). Functionally, membrane-bound phosphatidylinositol-4 kinase (PI4-kinase) that catalyzes the phosphorylation of phosphatidylinositol (PI) to phosphatidylinositol 4-phosphate (PI4P), a lipid that plays important roles in endocytosis, Golgi function, protein sorting and membrane trafficking. Besides, phosphorylation of phosphatidylinositol (PI) to phosphatidylinositol 4-phosphate (PI4P) is the first committed step in the generation of phosphatidylinositol 4,5-bisphosphate (PIP2), a precursor of the second messenger inositol 1,4,5-trisphosphate (InsP3). This Xenopus laevis (African clawed frog) protein is Phosphatidylinositol 4-kinase type 2-alpha (pi4k2a).